Here is a 734-residue protein sequence, read N- to C-terminus: Histone-lysine N-methyltransferase SET9 (734 aa).

In terms of domain architecture, SET spans 116 to 230; that stretch reads CPFEVNATNR…LGEEITVTYS (115 aa). 4 disordered regions span residues 343–459, 523–543, 567–591, and 681–734; these read FDTT…TTET, AVPN…QQGA, AVST…KQRV, and RKPW…AMAQ. A compositionally biased stretch (basic and acidic residues) spans 407–418; the sequence is EEPKPPSMREKP. Residues 527–543 are compositionally biased toward polar residues; the sequence is SAPSQIQEAENNAQQGA. A compositionally biased stretch (basic and acidic residues) spans 578–587; that stretch reads SEKPAPEPVR.

This sequence belongs to the class V-like SAM-binding methyltransferase superfamily. Histone-lysine methyltransferase family. Suvar4-20 subfamily.

It is found in the nucleus. The protein localises to the chromosome. The enzyme catalyses L-lysyl(20)-[histone H4] + 3 S-adenosyl-L-methionine = N(6),N(6),N(6)-trimethyl-L-lysyl(20)-[histone H4] + 3 S-adenosyl-L-homocysteine + 3 H(+). In terms of biological role, histone methyltransferase that trimethylates 'Lys-20' of histone H4 to form H4K20me3. The sequence is that of Histone-lysine N-methyltransferase SET9 (SET9) from Chaetomium globosum (strain ATCC 6205 / CBS 148.51 / DSM 1962 / NBRC 6347 / NRRL 1970) (Soil fungus).